We begin with the raw amino-acid sequence, 204 residues long: Large ribosomal subunit protein eL15 (204 aa).

G2 is lipidated: N-myristoyl glycine. S34 carries the phosphoserine modification. K83 participates in a covalent cross-link: Glycyl lysine isopeptide (Lys-Gly) (interchain with G-Cter in SUMO2). 2 positions are modified to phosphoserine: S97 and S100. A disordered region spans residues 165-186 (TSAGRKSRGLGKGHKFHHTIGG). Residues 169–182 (RKSRGLGKGHKFHH) are compositionally biased toward basic residues.

The protein belongs to the eukaryotic ribosomal protein eL15 family. Component of the large ribosomal subunit. Interacts with IFIT1 (via TPR repeats 1-4).

It localises to the cytoplasm. Its function is as follows. Component of the large ribosomal subunit. The ribosome is a large ribonucleoprotein complex responsible for the synthesis of proteins in the cell. This is Large ribosomal subunit protein eL15 (RPL15) from Bos taurus (Bovine).